The sequence spans 163 residues: Nucleotide-binding protein BCG9842_B4128 (163 aa).

The protein belongs to the YajQ family.

Functionally, nucleotide-binding protein. In Bacillus cereus (strain G9842), this protein is Nucleotide-binding protein BCG9842_B4128.